The following is a 250-amino-acid chain: MPSIDINCDMGESFGPWVMGQDTELMPHITAANIACGFHAGDPDVMLATVRAAIAADVAIGAHPGLPDLQGFGRRVMAVTPDEVYALTVYQVGALQAIARSQGGRLHHVKTHGALYTLTARDPALADAVARAVADVDPALPIYVANAAIAQATRERGLRAVYEVYADRSYQDDGTLTPRSQPHAMIEDVDQAIAQVKRMVKEGVVRALSGKDVPITADTLCIHGDQPGAALFARRIRAALEAEGIEIRTV.

This sequence belongs to the LamB/PxpA family. In terms of assembly, forms a complex composed of PxpA, PxpB and PxpC.

It catalyses the reaction 5-oxo-L-proline + ATP + 2 H2O = L-glutamate + ADP + phosphate + H(+). Its function is as follows. Catalyzes the cleavage of 5-oxoproline to form L-glutamate coupled to the hydrolysis of ATP to ADP and inorganic phosphate. This is 5-oxoprolinase subunit A 2 from Bordetella bronchiseptica (strain ATCC BAA-588 / NCTC 13252 / RB50) (Alcaligenes bronchisepticus).